A 123-amino-acid polypeptide reads, in one-letter code: WAP four-disulfide core domain protein 5 (123 aa).

Residues 1–24 (MRIQSLLLLGALLAVGSQLPAVFG) form the signal peptide. 2 WAP domains span residues 27–73 (KGEK…CVPR) and 74–121 (VSVK…RDPA). Cystine bridges form between C34–C62, C41–C66, C49–C61, C55–C70, C81–C109, C88–C113, C96–C108, and C102–C117.

The protein resides in the secreted. Putative acid-stable proteinase inhibitor. The polypeptide is WAP four-disulfide core domain protein 5 (WFDC5) (Papio anubis (Olive baboon)).